Here is a 198-residue protein sequence, read N- to C-terminus: Holliday junction branch migration complex subunit RuvA (198 aa).

The segment at 1-63 is domain I; that stretch reads MYDYIKGQLT…EDAHLLFGFH (63 aa). Positions 64–142 are domain II; that stretch reads TEDEKDVFLK…EAPQETGHTK (79 aa). Residues 143–147 are flexible linker; sequence ARSNK. Positions 148 to 198 are domain III; that stretch reads AGNTQLDEAIEALLALGYKATELKKIRAFFEGTSETAEQYIKSALKLLMKG.

It belongs to the RuvA family. In terms of assembly, homotetramer. Forms an RuvA(8)-RuvB(12)-Holliday junction (HJ) complex. HJ DNA is sandwiched between 2 RuvA tetramers; dsDNA enters through RuvA and exits via RuvB. An RuvB hexamer assembles on each DNA strand where it exits the tetramer. Each RuvB hexamer is contacted by two RuvA subunits (via domain III) on 2 adjacent RuvB subunits; this complex drives branch migration. In the full resolvosome a probable DNA-RuvA(4)-RuvB(12)-RuvC(2) complex forms which resolves the HJ.

It is found in the cytoplasm. Its function is as follows. The RuvA-RuvB-RuvC complex processes Holliday junction (HJ) DNA during genetic recombination and DNA repair, while the RuvA-RuvB complex plays an important role in the rescue of blocked DNA replication forks via replication fork reversal (RFR). RuvA specifically binds to HJ cruciform DNA, conferring on it an open structure. The RuvB hexamer acts as an ATP-dependent pump, pulling dsDNA into and through the RuvAB complex. HJ branch migration allows RuvC to scan DNA until it finds its consensus sequence, where it cleaves and resolves the cruciform DNA. This chain is Holliday junction branch migration complex subunit RuvA, found in Streptococcus pyogenes serotype M6 (strain ATCC BAA-946 / MGAS10394).